Consider the following 114-residue polypeptide: Cytochrome c oxidase subunit 7A2-like, mitochondrial (114 aa).

A mitochondrion-targeting transit peptide spans 1-55 (MYYKFSGFTQKLAGAWASDAYSPQGLRPVVSTEAPPIIFATPTKLSSGPTAYDYA). Residue Lys69 is modified to N6-acetyllysine. The helical transmembrane segment at 82-107 (PDQMLYRTTMALTVGGTIYCLIALYM) threads the bilayer.

The protein belongs to the cytochrome c oxidase VIIa family. Interacts with the mitochondrial respiratory complexes III (CIII) and IV (CIV), promoting their association.

The protein localises to the mitochondrion inner membrane. Assembly factor that mediates the formation of some mitochondrial respiratory supercomplexes (respirasomes), thereby promoting oxidative phosphorylation and energy metabolism. Acts as a molecular adapter that associates with both mitochondrial respiratory complexes III (CIII) and IV (CIV), promoting their association. Mediates the formation of various mitochondrial respiratory supercomplexes, such as MCIII(2)IV(2), composed of two CIII and two CIV, and the CS-respirasome (MCI(1)III(2)IV(2)), composed of one CI, two CIII and two CIV. Not involved in the formation of the canonical respirasome (MCI(1)III(2)IV(1)), composed of one CI, two CIII and one CIV. The formation of different respirasomes is important for cell adaptation to oxygen conditions and prevent metabolic exhaustion: supercomplexes mediated by COX7A2L/SCAF1 are required to maintain oxidative phosphorylation upon low oxygen conditions and promote metabolic rewiring toward glycolysis. This is Cytochrome c oxidase subunit 7A2-like, mitochondrial from Bos taurus (Bovine).